A 318-amino-acid polypeptide reads, in one-letter code: Glycerol 2-dehydrogenase (NADP(+)) (318 aa).

The active-site Proton donor is Tyr52. Residue His115 coordinates substrate. 217–277 (SPLGSQNQVP…SSTPSRIESN (61 aa)) provides a ligand contact to NADP(+).

This sequence belongs to the aldo/keto reductase family.

The catalysed reaction is glycerol + NADP(+) = dihydroxyacetone + NADPH + H(+). Glycerol oxidoreductase probably involved in glycerol synthesis. The chain is Glycerol 2-dehydrogenase (NADP(+)) (gld2) from Hypocrea jecorina (Trichoderma reesei).